The primary structure comprises 1213 residues: tRNA wybutosine-synthesizing protein 4 (1213 aa).

2 stretches are compositionally biased toward low complexity: residues 1 to 13 (METTEEVVAPATT) and 39 to 52 (ATTTTTTTDGTTPT). Residues 1-76 (METTEEVVAP…DDQVMGTNNS (76 aa)) form a disordered region. Residues 53–67 (HNEHASAKDPRKAQD) are compositionally biased toward basic and acidic residues. R117, G148, and D180 together coordinate S-adenosyl-L-methionine. Low complexity predominate over residues 215–248 (STPAATTTAAATTTTTTELKTTAATASSTSTEAP). The disordered stretch occupies residues 215–272 (STPAATTTAAATTTTTTELKTTAATASSTSTEAPQKPKKSPKPKDKSKAARAPAPTTA). Residues 289–290 (DL) and E318 each bind S-adenosyl-L-methionine. The tract at residues 879–900 (EPRSLPLRNQAPNGAEGNANGS) is disordered. The 161-residue stretch at 1006–1166 (PTEKPAVLSD…YAAGKDVYGN (161 aa)) folds into the JmjC domain.

The protein belongs to the methyltransferase superfamily. LCMT family.

The enzyme catalyses 7-[(3S)-3-amino-3-carboxypropyl]wyosine(37) in tRNA(Phe) + S-adenosyl-L-methionine = 7-[(3S)-(3-amino-3-methoxycarbonyl)propyl]wyosine(37) in tRNA(Phe) + S-adenosyl-L-homocysteine. The catalysed reaction is 7-[(3S)-(3-amino-3-methoxycarbonyl)propyl]wyosine(37) in tRNA(Phe) + S-adenosyl-L-methionine + CO2 = wybutosine(37) in tRNA(Phe) + S-adenosyl-L-homocysteine + 2 H(+). It functions in the pathway tRNA modification; wybutosine-tRNA(Phe) biosynthesis. Functionally, probable S-adenosyl-L-methionine-dependent methyltransferase that acts as a component of the wybutosine biosynthesis pathway. Wybutosine is a hyper modified guanosine with a tricyclic base found at the 3'-position adjacent to the anticodon of eukaryotic phenylalanine tRNA. May methylate the carboxyl group of leucine residues to form alpha-leucine ester residues. The protein is tRNA wybutosine-synthesizing protein 4 (lcm-2) of Neurospora crassa (strain ATCC 24698 / 74-OR23-1A / CBS 708.71 / DSM 1257 / FGSC 987).